We begin with the raw amino-acid sequence, 845 residues long: Protein SEY1 (845 aa).

Positions 1–29 (MELNVDSAKQLLAEHEQELQSAHDAHSIL) form a coiled coil. The Cytoplasmic portion of the chain corresponds to 1–749 (MELNVDSAKQ…KRATVSSIAQ (749 aa)). In terms of domain architecture, GB1/RHD3-type G spans 112–334 (GFGYDLCAVL…DPNFVFKTEY (223 aa)). Residue 122–129 (GSQSTGKS) participates in GTP binding. The helical transmembrane segment at 750 to 770 (VPLWMYGVMLVLGWNELMAIL) threads the bilayer. Residues 771 to 773 (SSP) are Lumenal-facing. The helical transmembrane segment at 774–794 (VYFAFLLVLIASAYIVWRLNL) threads the bilayer. Topologically, residues 795–845 (SGPLISVLRAVANEVHRLADAQLRTHFSQPLREPRPPAESRPAEQIELEPN) are cytoplasmic. The segment at 823–845 (QPLREPRPPAESRPAEQIELEPN) is disordered. Over residues 826–838 (REPRPPAESRPAE) the composition is skewed to basic and acidic residues.

Belongs to the TRAFAC class dynamin-like GTPase superfamily. GB1/RHD3 GTPase family. RHD3 subfamily.

The protein resides in the endoplasmic reticulum membrane. In terms of biological role, cooperates with the reticulon proteins and tubule-shaping DP1 family proteins to generate and maintain the structure of the tubular endoplasmic reticulum network. Has GTPase activity, which is required for its function in ER organization. This chain is Protein SEY1, found in Mycosarcoma maydis (Corn smut fungus).